The following is a 264-amino-acid chain: Phosphonoacetaldehyde hydrolase (264 aa).

The Nucleophile role is filled by Asp-9. Residues Asp-9 and Ala-11 each contribute to the Mg(2+) site. The Schiff-base intermediate with substrate role is filled by Lys-50. Asp-183 is a binding site for Mg(2+).

Belongs to the HAD-like hydrolase superfamily. PhnX family. In terms of assembly, homodimer. Requires Mg(2+) as cofactor.

The enzyme catalyses phosphonoacetaldehyde + H2O = acetaldehyde + phosphate + H(+). Involved in phosphonate degradation. This Bacillus cereus (strain ATCC 14579 / DSM 31 / CCUG 7414 / JCM 2152 / NBRC 15305 / NCIMB 9373 / NCTC 2599 / NRRL B-3711) protein is Phosphonoacetaldehyde hydrolase.